Here is a 453-residue protein sequence, read N- to C-terminus: Bifunctional protein GlmU (453 aa).

Residues 1-231 are pyrophosphorylase; that stretch reads MERTCLAVIL…EIEMTGCNNR (231 aa). UDP-N-acetyl-alpha-D-glucosamine is bound by residues 10–13, lysine 24, glutamine 77, 82–83, 105–107, glycine 143, glutamate 157, asparagine 172, and asparagine 229; these read LAAG, GT, and YGD. Aspartate 107 lines the Mg(2+) pocket. Mg(2+) is bound at residue asparagine 229. Residues 232–252 form a linker region; that stretch reads AELAVIERFWQERRRREMMLA. Residues 253–453 are N-acetyltransferase; it reads GVTMIAPETV…AIKAAKKAEA (201 aa). UDP-N-acetyl-alpha-D-glucosamine is bound by residues arginine 318 and lysine 336. The Proton acceptor role is filled by histidine 348. UDP-N-acetyl-alpha-D-glucosamine contacts are provided by tyrosine 351 and asparagine 362. Acetyl-CoA is bound by residues alanine 365, 371–372, serine 390, serine 408, and arginine 425; that span reads NY.

This sequence in the N-terminal section; belongs to the N-acetylglucosamine-1-phosphate uridyltransferase family. In the C-terminal section; belongs to the transferase hexapeptide repeat family. Homotrimer. It depends on Mg(2+) as a cofactor.

It localises to the cytoplasm. The catalysed reaction is alpha-D-glucosamine 1-phosphate + acetyl-CoA = N-acetyl-alpha-D-glucosamine 1-phosphate + CoA + H(+). It carries out the reaction N-acetyl-alpha-D-glucosamine 1-phosphate + UTP + H(+) = UDP-N-acetyl-alpha-D-glucosamine + diphosphate. It participates in nucleotide-sugar biosynthesis; UDP-N-acetyl-alpha-D-glucosamine biosynthesis; N-acetyl-alpha-D-glucosamine 1-phosphate from alpha-D-glucosamine 6-phosphate (route II): step 2/2. The protein operates within nucleotide-sugar biosynthesis; UDP-N-acetyl-alpha-D-glucosamine biosynthesis; UDP-N-acetyl-alpha-D-glucosamine from N-acetyl-alpha-D-glucosamine 1-phosphate: step 1/1. It functions in the pathway bacterial outer membrane biogenesis; LPS lipid A biosynthesis. Its function is as follows. Catalyzes the last two sequential reactions in the de novo biosynthetic pathway for UDP-N-acetylglucosamine (UDP-GlcNAc). The C-terminal domain catalyzes the transfer of acetyl group from acetyl coenzyme A to glucosamine-1-phosphate (GlcN-1-P) to produce N-acetylglucosamine-1-phosphate (GlcNAc-1-P), which is converted into UDP-GlcNAc by the transfer of uridine 5-monophosphate (from uridine 5-triphosphate), a reaction catalyzed by the N-terminal domain. This is Bifunctional protein GlmU from Rhizobium etli (strain ATCC 51251 / DSM 11541 / JCM 21823 / NBRC 15573 / CFN 42).